Reading from the N-terminus, the 79-residue chain is Pulmonary surfactant-associated protein B (79 aa).

Residues 4 to 79 (PLPFCWLCRT…VCGLVLRCSS (76 aa)) form the Saposin B-type domain. Disulfide bonds link Cys8–Cys77, Cys11–Cys71, and Cys35–Cys46.

Homodimer; disulfide-linked.

It is found in the secreted. It localises to the extracellular space. The protein localises to the surface film. Functionally, pulmonary surfactant-associated proteins promote alveolar stability by lowering the surface tension at the air-liquid interface in the peripheral air spaces. SP-B increases the collapse pressure of palmitic acid to nearly 70 millinewtons per meter. This chain is Pulmonary surfactant-associated protein B (SFTPB), found in Sus scrofa (Pig).